We begin with the raw amino-acid sequence, 724 residues long: MQGSKGVENPAFVPSSPDTPRRASASPSQVEVSAVASRNQNGGSQPRESEDPQKSTEPSPPSSTLPASDEPPGSQLSELEEGPCGWRNFHPQCLQRCNNPKGFLLHYCLLALTQGIVVNGLVNISISTIEKRYEMKSSLTGLISSSYDISFCVLSLFVSFFGERGHKPRWLAFASFMIGLGALVFSLPHFFSGRYELGTIFEDTCLTRNSTRCASSTSLLSNYFYVFVLGQLLLGTGGTPLYTLGTAFIDDSVPTHKSSLYIGIGYSMSILGPAIGYVLGGQLLTMYIDVAMGQSSDLTEDDPRWLGAWWIGFLLAWLFAWSLIMPFSCFPKHLPGTAKIQAGKTSQTHQNNSTSFQHMDENFGKSIKDFPTAVKNLMRNTVFICLVLSTTSEALVTTGFATFLPKFIENQFGLTSSFAATLGGAVLIPGAALGQILGGVLVSKFKMKCKNTMKFALCTSGVALMLSFVFIYAKCENGPFAGVSESYNGTGEMGNLTAPCNANCNCLRSYYYPLCGSDGVQYFSPCFAGCLNSVSNRKPKAYYNCSCIERKVDITSTAXSPDFEARAGKCKTQCSNLPIFLGIFFITVIFTFMAGTPITVSILRCVNHRQRSLALGVQFMLLRLLGTIPGPIIFGVTIDSTCVLWDINECGTKGACWIYDNIRMAHMLVAISVTCKVITIFFNGLAIVLYKPPPPGTEVSFQSQNVVVSTITVEEDLNKIENEG.

Residues 1–80 (MQGSKGVENP…PPGSQLSELE (80 aa)) are disordered. At 1 to 101 (MQGSKGVENP…QCLQRCNNPK (101 aa)) the chain is on the cytoplasmic side. Phosphoserine is present on residues Ser-15 and Ser-16. Thr-19 bears the Phosphothreonine mark. 3 positions are modified to phosphoserine: Ser-24, Ser-26, and Ser-28. Polar residues predominate over residues 25-46 (ASPSQVEVSAVASRNQNGGSQP). Residues 102 to 122 (GFLLHYCLLALTQGIVVNGLV) form a helical membrane-spanning segment. The Extracellular portion of the chain corresponds to 123-141 (NISISTIEKRYEMKSSLTG). Residues 142–162 (LISSSYDISFCVLSLFVSFFG) form a helical membrane-spanning segment. Residues 163-168 (ERGHKP) are Cytoplasmic-facing. The helical transmembrane segment at 169–193 (RWLAFASFMIGLGALVFSLPHFFSG) threads the bilayer. At 194–218 (RYELGTIFEDTCLTRNSTRCASSTS) the chain is on the extracellular side. Residues 219–249 (LLSNYFYVFVLGQLLLGTGGTPLYTLGTAFI) traverse the membrane as a helical segment. Residues 250 to 269 (DDSVPTHKSSLYIGIGYSMS) lie on the Cytoplasmic side of the membrane. The chain crosses the membrane as a helical span at residues 270–290 (ILGPAIGYVLGGQLLTMYIDV). The Extracellular segment spans residues 291–306 (AMGQSSDLTEDDPRWL). Residues 307–331 (GAWWIGFLLAWLFAWSLIMPFSCFP) form a helical membrane-spanning segment. At 332–376 (KHLPGTAKIQAGKTSQTHQNNSTSFQHMDENFGKSIKDFPTAVKN) the chain is on the cytoplasmic side. A helical transmembrane segment spans residues 377–398 (LMRNTVFICLVLSTTSEALVTT). At 399–418 (GFATFLPKFIENQFGLTSSF) the chain is on the extracellular side. A helical transmembrane segment spans residues 419 to 442 (AATLGGAVLIPGAALGQILGGVLV). At 443-446 (SKFK) the chain is on the cytoplasmic side. The chain crosses the membrane as a helical span at residues 447–470 (MKCKNTMKFALCTSGVALMLSFVF). The Extracellular portion of the chain corresponds to 471–580 (IYAKCENGPF…KTQCSNLPIF (110 aa)). The 56-residue stretch at 494 to 549 (GNLTAPCNANCNCLRSYYYPLCGSDGVQYFSPCFAGCLNSVSNRKPKAYYNCSCIE) folds into the Kazal-like domain. Cystine bridges form between Cys-500–Cys-530, Cys-506–Cys-526, and Cys-515–Cys-547. A helical transmembrane segment spans residues 581 to 603 (LGIFFITVIFTFMAGTPITVSIL). Over 604-612 (RCVNHRQRS) the chain is Cytoplasmic. Residues 613-638 (LALGVQFMLLRLLGTIPGPIIFGVTI) form a helical membrane-spanning segment. Over 639–672 (DSTCVLWDINECGTKGACWIYDNIRMAHMLVAIS) the chain is Extracellular. A helical membrane pass occupies residues 673 to 690 (VTCKVITIFFNGLAIVLY). At 691–724 (KPPPPGTEVSFQSQNVVVSTITVEEDLNKIENEG) the chain is on the cytoplasmic side.

This sequence belongs to the organo anion transporter (TC 2.A.60) family. In terms of tissue distribution, predominantly expressed in kidney and lung but also weakly expressed in brain. Localizes primarily in the proximal straight tubules, the S3 fraction of the nephron.

The protein resides in the basolateral cell membrane. The protein localises to the apical cell membrane. It catalyses the reaction estrone 3-sulfate(out) = estrone 3-sulfate(in). It carries out the reaction L-thyroxine(out) = L-thyroxine(in). The enzyme catalyses 3,3',5-triiodo-L-thyronine(out) = 3,3',5-triiodo-L-thyronine(in). The catalysed reaction is chenodeoxycholate(out) = chenodeoxycholate(in). It catalyses the reaction glycocholate(out) = glycocholate(in). It carries out the reaction L-homoarginine(in) = L-homoarginine(out). The enzyme catalyses L-arginine(in) = L-arginine(out). The catalysed reaction is N(omega),N(omega)-dimethyl-L-arginine(out) = N(omega),N(omega)-dimethyl-L-arginine(in). Mediates the transport of organic anions such as steroids (estrone 3-sulfate, chenodeoxycholate, glycocholate) and thyroid hormones (3,3',5-triiodo-L-thyronine (T3), L-thyroxine (T4)), in the kidney. Capable of transporting cAMP and pharmacological substances such as digoxin, ouabain and methotrexate. Transport is independent of sodium, chloride ion, and ATP. Transport activity is stimulated by an acidic extracellular environment due to increased substrate affinity to the transporter. The driving force for this transport activity is currently not known. The role of hydrogencarbonate (HCO3(-), bicarbonate) as the probable counteranion that exchanges for organic anions is still not well defined. Functions as an uptake transporter at the apical membrane, suggesting a role in renal reabsorption. Involved in the renal secretion of the uremic toxin ADMA (N(omega),N(omega)-dimethyl-L-arginine or asymmetrical dimethylarginine), which is associated to cardiovascular events and mortality, and the structurally related amino acids L-arginine and L-homoarginine (a cardioprotective biomarker). Can act bidirectionally, suggesting a dual protective role of this transport protein; exporting L-homoarginine after being synthesized in proximal tubule cells, and mediating uptake of ADMA from the blood into proximal tubule cells where it is degraded by the enzyme dimethylarginine dimethylaminohydrolase 1 (DDAH1). May be involved in sperm maturation by enabling directed movement of organic anions and compounds within or between cells. This ion-transporting process is important to maintain the strict epididymal homeostasis necessary for sperm maturation. May have a role in secretory functions since seminal vesicle epithelial cells are assumed to secrete proteins involved in decapacitation by modifying surface proteins to facilitate the acquisition of the ability to fertilize the egg. This chain is Solute carrier organic anion transporter family member 4C1, found in Rattus norvegicus (Rat).